The sequence spans 211 residues: Wound-induced protein WIN2 (211 aa).

A signal peptide spans 1-25 (MVKLSCGPILLALVLCISLTSVANA). The Chitin-binding type-1 domain maps to 26 to 68 (QQCGRQRGGALCGNNLCCSQFGWCGSTPEYCSPSQGCQSQCTG). 4 cysteine pairs are disulfide-bonded: Cys-28–Cys-43, Cys-37–Cys-49, Cys-42–Cys-56, and Cys-62–Cys-66. In terms of domain architecture, Barwin spans 77–198 (GSAQNVRATY…VNYQFVNCGD (122 aa)).

The sequence is that of Wound-induced protein WIN2 (WIN2) from Solanum tuberosum (Potato).